A 227-amino-acid polypeptide reads, in one-letter code: Octanoyltransferase (227 aa).

The BPL/LPL catalytic domain occupies 34–212 (RQREDGLMLL…AFAEVFPVTW (179 aa)). Substrate contacts are provided by residues 76–83 (RGGEVTYH), 143–145 (AIA), and 156–158 (GFA). Catalysis depends on Cys174, which acts as the Acyl-thioester intermediate.

Belongs to the LipB family.

It is found in the cytoplasm. The enzyme catalyses octanoyl-[ACP] + L-lysyl-[protein] = N(6)-octanoyl-L-lysyl-[protein] + holo-[ACP] + H(+). It functions in the pathway protein modification; protein lipoylation via endogenous pathway; protein N(6)-(lipoyl)lysine from octanoyl-[acyl-carrier-protein]: step 1/2. Its function is as follows. Catalyzes the transfer of endogenously produced octanoic acid from octanoyl-acyl-carrier-protein onto the lipoyl domains of lipoate-dependent enzymes. Lipoyl-ACP can also act as a substrate although octanoyl-ACP is likely to be the physiological substrate. In Synechocystis sp. (strain ATCC 27184 / PCC 6803 / Kazusa), this protein is Octanoyltransferase.